Reading from the N-terminus, the 175-residue chain is Large ribosomal subunit protein uL6 (175 aa).

Belongs to the universal ribosomal protein uL6 family. As to quaternary structure, part of the 50S ribosomal subunit.

In terms of biological role, this protein binds to the 23S rRNA, and is important in its secondary structure. It is located near the subunit interface in the base of the L7/L12 stalk, and near the tRNA binding site of the peptidyltransferase center. The chain is Large ribosomal subunit protein uL6 from Xylella fastidiosa (strain M23).